We begin with the raw amino-acid sequence, 348 residues long: Sex-lethal homolog (348 aa).

RRM domains follow at residues 110-188 (TNLI…YARP) and 196-276 (TNLY…LAEE). The span at 296-310 (GGGGGGGGGGGGGMG) shows a compositional bias: gly residues. The tract at residues 296–317 (GGGGGGGGGGGGGMGGPPPPPM) is disordered.

The protein resides in the nucleus. In terms of biological role, unknown; apparently not involved in somatic sex determination. The polypeptide is Sex-lethal homolog (SXL) (Ceratitis capitata (Mediterranean fruit fly)).